The primary structure comprises 530 residues: Testis-expressed protein 44 (530 aa).

Acidic residues predominate over residues 1–10 (MTAEPLEDPE). Disordered stretches follow at residues 1–85 (MTAE…FIRT), 207–233 (ATSA…TSLL), 256–290 (ENNR…QPVL), and 305–384 (QTSV…SPDF). 3 stretches are compositionally biased toward polar residues: residues 11-26 (ASSS…SSDN), 222-233 (GQDNPEETTSLL), and 257-280 (NNRT…TLGN). Residues 365–381 (PPDPPDPGSPGGSPPHS) are compositionally biased toward pro residues. S468 is modified (phosphoserine).

It localises to the cytoplasm. This chain is Testis-expressed protein 44 (Tex44), found in Mus musculus (Mouse).